Consider the following 140-residue polypeptide: uncharacterized protein (140 aa).

Asn36 is a glycosylation site (N-linked (GlcNAc...) asparagine). Residues 91 to 107 traverse the membrane as a helical segment; it reads LFMSLIGLCVCYMNLVF. Residues 113–122 are compositionally biased toward polar residues; the sequence is QPSSSGSKGN. The segment at 113 to 140 is disordered; sequence QPSSSGSKGNTETTIETTTEVETETAKQ. Acidic residues predominate over residues 131-140; that stretch reads TEVETETAKQ.

It localises to the endoplasmic reticulum membrane. This is an uncharacterized protein from Saccharomyces cerevisiae (strain ATCC 204508 / S288c) (Baker's yeast).